The chain runs to 590 residues: DELLA protein GAI1 (590 aa).

The span at 1 to 10 (MKREYHHPHH) shows a compositional bias: basic residues. Positions 1–28 (MKREYHHPHHPTCSTSPTGKGKMWDADP) are disordered. The short motif at 35–39 (DELLA) is the DELLA motif element. Positions 153–182 (HIEQPPQQPPAPPLYQRDNKRLKPTTSATA) are disordered. Positions 205–575 (VDSQETGIRL…RPLIATSAWQ (371 aa)) constitute a GRAS domain. The leucine repeat I (LRI) stretch occupies residues 212-266 (IRLVHTLMACAEAVQQENLKLAEALVKQIGFLAVSQAGAMRKVATYFAEGLARRI). Residues 284-349 (QMHFYETCPY…GGPPSFRLTG (66 aa)) are VHIID. The VHIID signature appears at 315 to 319 (VHVID). Residues 363–395 (EVGWKLAQLAETIHVEFEYRGFVANSLADLDAS) form a leucine repeat II (LRII) region. The segment at 405–496 (VAVNSVFELH…EVYLGQQICN (92 aa)) is PFYRE. Residues 413–417 (LHSLL) carry the LXXLL motif motif. Positions 499–575 (ACEGPERVER…RPLIATSAWQ (77 aa)) are SAW.

This sequence belongs to the GRAS family. DELLA subfamily. Post-translationally, phosphorylated. Ubiquitinated. Upon GA application it is ubiquitinated, leading to its subsequent degradation.

Its subcellular location is the nucleus. Functionally, probable transcriptional regulator that acts as a repressor of the gibberellin (GA) signaling pathway. Probably acts by participating in large multiprotein complexes that repress transcription of GA-inducible genes. Upon GA application, it is degraded by the proteasome, allowing the GA signaling pathway. This Vitis vinifera (Grape) protein is DELLA protein GAI1 (GAI1).